Here is a 29-residue protein sequence, read N- to C-terminus: Augerpeptide hheTx2 (29 aa).

Contains 4 disulfide bonds. In terms of tissue distribution, expressed by the venom duct.

Its subcellular location is the secreted. This Hastula hectica (Sea snail) protein is Augerpeptide hheTx2.